The primary structure comprises 617 residues: Na(+)/H(+) antiporter NhaA 1 (617 aa).

The tract at residues 1-26 (MTVTEPATQRGFPLLPSRLSRGSKAT) is disordered. The na(+)/H(+) antiporter NhaA stretch occupies residues 1–433 (MTVTEPATQR…GWAIFRITDW (433 aa)). 11 helical membrane-spanning segments follow: residues 33 to 53 (AAAL…SPWA), 75 to 95 (MTVK…IVGL), 113 to 133 (AVPV…FLAF), 141 to 161 (HAWG…LAII), 171 to 191 (LFLL…IAVL), 198 to 218 (VAPL…RYLP), 234 to 254 (IALY…ALLI), 304 to 324 (VSPV…AGVL), 341 to 361 (GIVA…TWLI), 378 to 398 (IAGG…IVDI), and 411 to 431 (IGVL…FRIT). One can recognise a Thioredoxin domain in the interval 434-617 (LSPPEPVGLK…LIRALEAGRG (184 aa)).

The protein in the N-terminal section; belongs to the NhaA Na(+)/H(+) (TC 2.A.33) antiporter family.

It localises to the cell membrane. The catalysed reaction is Na(+)(in) + 2 H(+)(out) = Na(+)(out) + 2 H(+)(in). In terms of biological role, na(+)/H(+) antiporter that extrudes sodium in exchange for external protons. This Mycolicibacterium gilvum (strain PYR-GCK) (Mycobacterium gilvum (strain PYR-GCK)) protein is Na(+)/H(+) antiporter NhaA 1.